We begin with the raw amino-acid sequence, 78 residues long: Large ribosomal subunit protein uL23 (78 aa).

This sequence belongs to the universal ribosomal protein uL23 family. Part of the 50S ribosomal subunit. Contacts protein L29.

Binds to 23S rRNA. One of the proteins that surrounds the polypeptide exit tunnel on the outside of the ribosome. In Nanoarchaeum equitans (strain Kin4-M), this protein is Large ribosomal subunit protein uL23.